The sequence spans 396 residues: Lipid-A-disaccharide synthase (396 aa).

It belongs to the LpxB family.

It catalyses the reaction a lipid X + a UDP-2-N,3-O-bis[(3R)-3-hydroxyacyl]-alpha-D-glucosamine = a lipid A disaccharide + UDP + H(+). It participates in bacterial outer membrane biogenesis; LPS lipid A biosynthesis. Its function is as follows. Condensation of UDP-2,3-diacylglucosamine and 2,3-diacylglucosamine-1-phosphate to form lipid A disaccharide, a precursor of lipid A, a phosphorylated glycolipid that anchors the lipopolysaccharide to the outer membrane of the cell. The sequence is that of Lipid-A-disaccharide synthase from Acinetobacter baylyi (strain ATCC 33305 / BD413 / ADP1).